Reading from the N-terminus, the 234-residue chain is Large ribosomal subunit protein uL1 (234 aa).

The protein belongs to the universal ribosomal protein uL1 family. Part of the 50S ribosomal subunit.

Binds directly to 23S rRNA. The L1 stalk is quite mobile in the ribosome, and is involved in E site tRNA release. In terms of biological role, protein L1 is also a translational repressor protein, it controls the translation of the L11 operon by binding to its mRNA. This Helicobacter pylori (strain Shi470) protein is Large ribosomal subunit protein uL1.